Reading from the N-terminus, the 105-residue chain is Nucleoid-associated protein cu1912 (105 aa).

It belongs to the YbaB/EbfC family. As to quaternary structure, homodimer.

It localises to the cytoplasm. The protein resides in the nucleoid. Binds to DNA and alters its conformation. May be involved in regulation of gene expression, nucleoid organization and DNA protection. The polypeptide is Nucleoid-associated protein cu1912 (Corynebacterium urealyticum (strain ATCC 43042 / DSM 7109)).